The primary structure comprises 1786 residues: Laminin subunit beta-1 (1786 aa).

The signal sequence occupies residues 1-21; sequence MGLLQVFAFGVLALWGTRVCA. The Laminin N-terminal domain occupies 31 to 270; the sequence is AEGSCYPATG…AVYDMVVRGN (240 aa). Asn120 is a glycosylation site (N-linked (GlcNAc...) asparagine). A Phosphoserine modification is found at Ser250. Cystine bridges form between Cys271–Cys280, Cys273–Cys298, Cys300–Cys309, Cys312–Cys332, Cys335–Cys344, Cys337–Cys362, Cys365–Cys374, Cys377–Cys395, Cys398–Cys411, Cys400–Cys426, Cys428–Cys437, Cys440–Cys455, Cys458–Cys472, Cys460–Cys479, Cys481–Cys490, Cys493–Cys507, Cys510–Cys522, Cys512–Cys529, and Cys531–Cys540. Laminin EGF-like domains lie at 271-334, 335-397, 398-457, and 458-509; these read CFCY…ACKK, CNCN…LCEP, CTCD…GCKS, and CACN…GCRP. N-linked (GlcNAc...) asparagine glycosylation occurs at Asn356. The region spanning 510–540 is the Laminin EGF-like 5; truncated domain; that stretch reads CDCDLGGALNNSCSEDSGQCSCLPHMIGRQC. N-linked (GlcNAc...) asparagine glycosylation is present at Asn519. The Laminin IV type B domain occupies 549–767; that stretch reads FTTLDHYIYE…IIFSISALIH (219 aa). An N-linked (GlcNAc...) asparagine glycan is attached at Asn677. Cystine bridges form between Cys773–Cys785, Cys775–Cys792, Cys794–Cys803, Cys806–Cys818, Cys821–Cys833, Cys823–Cys840, Cys842–Cys851, Cys854–Cys864, Cys867–Cys876, Cys869–Cys883, Cys886–Cys895, Cys898–Cys914, Cys917–Cys933, Cys919–Cys944, Cys946–Cys955, Cys958–Cys973, Cys976–Cys990, Cys978–Cys997, Cys1000–Cys1009, Cys1012–Cys1025, Cys1028–Cys1040, Cys1030–Cys1054, Cys1056–Cys1065, Cys1068–Cys1081, Cys1084–Cys1096, Cys1086–Cys1103, Cys1105–Cys1114, Cys1117–Cys1129, Cys1132–Cys1144, Cys1134–Cys1151, Cys1153–Cys1162, and Cys1165–Cys1176. Laminin EGF-like domains follow at residues 773-820, 821-866, 867-916, 917-975, 976-1027, 1028-1083, 1084-1131, and 1132-1178; these read CECD…GCKP, CDCH…SCQP, CQCN…HCRP, CPCP…SCQP, CQCH…DCRK, CVCN…GCGP, CNCN…ECRA, and CDCD…DCTP. A glycan (N-linked (GlcNAc...) asparagine) is linked at Asn1041. The segment at 1179–1397 is domain II; the sequence is CHQCFALWDA…LDLSAVAQMT (219 aa). N-linked (GlcNAc...) asparagine glycans are attached at residues Asn1195, Asn1279, Asn1336, and Asn1343. The stretch at 1216–1315 forms a coiled coil; that stretch reads YRETVDSVEK…LEFIKNSDIQ (100 aa). The stretch at 1368–1388 forms a coiled coil; that stretch reads KEQQEEQARLLDELAGKLQSL. Residues 1398-1430 are domain alpha; it reads CGTPPGADCSESECGGPNCRTDEGEKKCGGPGC. Residues 1431–1786 form a domain I region; it reads GGLVTVAHSA…EKVAVYSTCL (356 aa). Residues 1448-1778 are a coiled coil; the sequence is DRDVLSALAE…RSLLKDISEK (331 aa). Residue Asn1487 is glycosylated (N-linked (GlcNAc...) asparagine). Residue Ser1496 is modified to Phosphoserine. 2 N-linked (GlcNAc...) asparagine glycosylation sites follow: Asn1542 and Asn1643. Position 1666 is a phosphoserine (Ser1666).

In terms of assembly, laminin is a complex glycoprotein, consisting of three different polypeptide chains (alpha, beta, gamma), which are bound to each other by disulfide bonds into a cross-shaped molecule comprising one long and three short arms with globules at each end. Beta-1 is a subunit of laminin-1 (laminin-111 or EHS laminin), laminin-2 (laminin-211 or merosin), laminin-6 (laminin-311 or K-laminin), laminin-8 (laminin-411), laminin-10 (laminin-511) and laminin-12 (laminin-213). Interacts with ITGB1. In terms of tissue distribution, widely expressed in the embryo. High levels are detected in the cerebellar basement membrane, at postnatal day 7.

The protein resides in the secreted. It is found in the extracellular space. Its subcellular location is the extracellular matrix. It localises to the basement membrane. Binding to cells via a high affinity receptor, laminin is thought to mediate the attachment, migration and organization of cells into tissues during embryonic development by interacting with other extracellular matrix components. Involved in the organization of the laminar architecture of the cerebral cortex. It is probably required for the integrity of the basement membrane/glia limitans that serves as an anchor point for the endfeet of radial glial cells and as a physical barrier to migrating neurons. Radial glial cells play a central role in cerebral cortical development, where they act both as the proliferative unit of the cerebral cortex and a scaffold for neurons migrating toward the pial surface. This is Laminin subunit beta-1 (Lamb1) from Mus musculus (Mouse).